The following is a 215-amino-acid chain: UPF0502 protein YceH (215 aa).

Lysine 80 bears the N6-acetyllysine mark.

The protein belongs to the UPF0502 family.

This Escherichia fergusonii (strain ATCC 35469 / DSM 13698 / CCUG 18766 / IAM 14443 / JCM 21226 / LMG 7866 / NBRC 102419 / NCTC 12128 / CDC 0568-73) protein is UPF0502 protein YceH.